A 161-amino-acid chain; its full sequence is MPSFDVVSEANMIEVKNAVEQSNKEISTRFDFKGSDARVEQKERELTLYADDDFKLGQVKDVLIGKMAKRNVDVRFLDYGKIEKIGGDKVKQVVTIKKGVSGDLAKKVVRIVKDSKIKVQASIQGDAVRVSGAKRDDLQSTIALLRKEVTDTPLDFNNFRD.

It belongs to the YajQ family.

Nucleotide-binding protein. The protein is Nucleotide-binding protein BMASAVP1_A0673 of Burkholderia mallei (strain SAVP1).